Here is a 157-residue protein sequence, read N- to C-terminus: Protein MG115 homolog (157 aa).

The protein belongs to the CinA family.

The protein is Protein MG115 homolog of Mycoplasma pneumoniae (strain ATCC 29342 / M129 / Subtype 1) (Mycoplasmoides pneumoniae).